The following is a 486-amino-acid chain: UDP-N-acetylglucosamine pyrophosphorylase (486 aa).

The Substrate binding signature appears at 109–112 (MAGG). UTP contacts are provided by residues 109 to 112 (MAGG), K123, Q199, and G226. N227 is a substrate binding site. D257 serves as a coordination point for UTP. A Substrate binding motif is present at residues 309-310 (EY). Residue K389 coordinates UTP. K421 lines the substrate pocket.

The protein belongs to the UDPGP type 1 family.

The protein resides in the cytoplasm. It catalyses the reaction N-acetyl-alpha-D-glucosamine 1-phosphate + UTP + H(+) = UDP-N-acetyl-alpha-D-glucosamine + diphosphate. It participates in nucleotide-sugar biosynthesis; UDP-N-acetyl-alpha-D-glucosamine biosynthesis; UDP-N-acetyl-alpha-D-glucosamine from N-acetyl-alpha-D-glucosamine 1-phosphate: step 1/1. This is UDP-N-acetylglucosamine pyrophosphorylase (UAP1) from Candida albicans (Yeast).